Consider the following 179-residue polypeptide: Protein HEADING DATE 3A (179 aa).

The protein belongs to the phosphatidylethanolamine-binding protein family. In terms of tissue distribution, expressed in the inner region of the SAM, stem and leaf blade vascular tissues (at protein level).

It is found in the cytoplasm. The protein localises to the nucleus. Functionally, probable mobile flower-promoting signal (florigen) that moves from the leaf to the shoot apical meristem (SAM) and induces flowering. Promotes the transition from vegetative growth to flowering downstream of HD1 and EHD1 under short day (SD) conditions. Acts upstream of MADS14 and MADS15. This Oryza sativa subsp. japonica (Rice) protein is Protein HEADING DATE 3A (HD3A).